The sequence spans 510 residues: Chromosomal replication initiator protein DnaA (510 aa).

The segment at 1–87 (MSVELWQQCV…IGSRRSSAPR (87 aa)) is domain I, interacts with DnaA modulators. The domain II stretch occupies residues 87-173 (RAAPNAPVSA…QVEGALKHTS (87 aa)). Residues 140–160 (DSFDAMAEPASAPASSGRAEQ) are disordered. Low complexity predominate over residues 144-157 (AMAEPASAPASSGR). The segment at 174 to 390 (YLNRTFTFDT…GALKRVIAHS (217 aa)) is domain III, AAA+ region. ATP contacts are provided by Gly218, Gly220, Lys221, and Thr222. Positions 391-510 (HFMGRDITIE…YKNLLRTLTT (120 aa)) are domain IV, binds dsDNA.

The protein belongs to the DnaA family. In terms of assembly, oligomerizes as a right-handed, spiral filament on DNA at oriC.

It localises to the cytoplasm. Functionally, plays an essential role in the initiation and regulation of chromosomal replication. ATP-DnaA binds to the origin of replication (oriC) to initiate formation of the DNA replication initiation complex once per cell cycle. Binds the DnaA box (a 9 base pair repeat at the origin) and separates the double-stranded (ds)DNA. Forms a right-handed helical filament on oriC DNA; dsDNA binds to the exterior of the filament while single-stranded (ss)DNA is stabiized in the filament's interior. The ATP-DnaA-oriC complex binds and stabilizes one strand of the AT-rich DNA unwinding element (DUE), permitting loading of DNA polymerase. After initiation quickly degrades to an ADP-DnaA complex that is not apt for DNA replication. Binds acidic phospholipids. The chain is Chromosomal replication initiator protein DnaA from Pseudomonas putida (strain GB-1).